Reading from the N-terminus, the 38-residue chain is Photosystem II reaction center protein L (38 aa).

A helical transmembrane segment spans residues 17-37 (SLYWGLLLIFVLAVLFSSYIF).

It belongs to the PsbL family. As to quaternary structure, PSII is composed of 1 copy each of membrane proteins PsbA, PsbB, PsbC, PsbD, PsbE, PsbF, PsbH, PsbI, PsbJ, PsbK, PsbL, PsbM, PsbT, PsbX, PsbY, PsbZ, Psb30/Ycf12, at least 3 peripheral proteins of the oxygen-evolving complex and a large number of cofactors. It forms dimeric complexes.

The protein resides in the plastid. Its subcellular location is the chloroplast thylakoid membrane. Functionally, one of the components of the core complex of photosystem II (PSII). PSII is a light-driven water:plastoquinone oxidoreductase that uses light energy to abstract electrons from H(2)O, generating O(2) and a proton gradient subsequently used for ATP formation. It consists of a core antenna complex that captures photons, and an electron transfer chain that converts photonic excitation into a charge separation. This subunit is found at the monomer-monomer interface and is required for correct PSII assembly and/or dimerization. This is Photosystem II reaction center protein L from Tetradesmus obliquus (Green alga).